Reading from the N-terminus, the 388-residue chain is Dual-specificity RNA methyltransferase RlmN (388 aa).

E109 (proton acceptor) is an active-site residue. Positions 115-354 constitute a Radical SAM core domain; the sequence is EEDRATLCVS…TIVRKTRGDD (240 aa). C122 and C359 are joined by a disulfide. Residues C129, C133, and C136 each coordinate [4Fe-4S] cluster. S-adenosyl-L-methionine is bound by residues 183-184, S215, 237-239, and N316; these read GE and SLH. The active-site S-methylcysteine intermediate is C359.

The protein belongs to the radical SAM superfamily. RlmN family. It depends on [4Fe-4S] cluster as a cofactor.

It is found in the cytoplasm. The enzyme catalyses adenosine(2503) in 23S rRNA + 2 reduced [2Fe-2S]-[ferredoxin] + 2 S-adenosyl-L-methionine = 2-methyladenosine(2503) in 23S rRNA + 5'-deoxyadenosine + L-methionine + 2 oxidized [2Fe-2S]-[ferredoxin] + S-adenosyl-L-homocysteine. It carries out the reaction adenosine(37) in tRNA + 2 reduced [2Fe-2S]-[ferredoxin] + 2 S-adenosyl-L-methionine = 2-methyladenosine(37) in tRNA + 5'-deoxyadenosine + L-methionine + 2 oxidized [2Fe-2S]-[ferredoxin] + S-adenosyl-L-homocysteine. Its function is as follows. Specifically methylates position 2 of adenine 2503 in 23S rRNA and position 2 of adenine 37 in tRNAs. m2A2503 modification seems to play a crucial role in the proofreading step occurring at the peptidyl transferase center and thus would serve to optimize ribosomal fidelity. The polypeptide is Dual-specificity RNA methyltransferase RlmN (Enterobacter sp. (strain 638)).